Reading from the N-terminus, the 327-residue chain is Plastid lipid-associated protein 1, chloroplastic (327 aa).

The N-terminal 84 residues, 1–84 (MATTVPLFSQ…WGPEIGLNSS (84 aa)), are a transit peptide targeting the chloroplast. The interval 56-78 (VNDEWGPDSKGRGGDVDDEWGPE) is disordered. A coiled-coil region spans residues 85-107 (VAEKVAEEAIESAEETERLKRVL).

It belongs to the PAP/fibrillin family. In terms of tissue distribution, expressed in anthers, sepals seeds, fruit coats, and leaves. Very low in petals and pistils and not detected in roots.

It localises to the plastid. It is found in the chloroplast. Its function is as follows. May modulate the action of carotenoids. This is Plastid lipid-associated protein 1, chloroplastic (PAP1) from Brassica campestris (Field mustard).